A 379-amino-acid polypeptide reads, in one-letter code: MKILRKNHPLLKIINHSFIDLPAPSNISSWWNFGSLLGVCLMIQILTGLFLAMHYTSDTTTAFSSVAHICRDVNYGWLIRYLHANGASMFFICLFIHVGRGIYYGSYVLSETWNIGIILFLTTMATAFVGYVLPWGQMSFWGATVITNLLSAIPYIGNTLVEWIWGGFSVDKATLTRFFAFHFILPFIITAFVLVHLLFLHETGSNNPSGLNSDSDKIPFHPYYTIKDLLGILFLLMALMILALFFPDILGDPDNYTPANPLNTPAHIKPEWYFLFAYAILRSIPNKLGGVLALLLSIIILAAFPLLNTSKQHGLIFRPVTQTIYWIFIANLLVLTWIGGQPVEYPFTMIGQIASVIYFATIIVLMPVSNTIENNIIKL.

Helical transmembrane passes span 33-53 (FGSLLGVCLMIQILTGLFLAM), 77-98 (WLIRYLHANGASMFFICLFIHV), 113-133 (WNIGIILFLTTMATAFVGYVL), and 178-198 (FFAFHFILPFIITAFVLVHLL). Heme b is bound by residues histidine 83 and histidine 97. 2 residues coordinate heme b: histidine 182 and histidine 196. Histidine 201 contributes to the a ubiquinone binding site. 4 helical membrane-spanning segments follow: residues 226–246 (IKDLLGILFLLMALMILALFF), 288–308 (LGGVLALLLSIIILAAFPLLN), 320–340 (VTQTIYWIFIANLLVLTWIGG), and 347–367 (FTMIGQIASVIYFATIIVLMP).

It belongs to the cytochrome b family. The cytochrome bc1 complex contains 11 subunits: 3 respiratory subunits (MT-CYB, CYC1 and UQCRFS1), 2 core proteins (UQCRC1 and UQCRC2) and 6 low-molecular weight proteins (UQCRH/QCR6, UQCRB/QCR7, UQCRQ/QCR8, UQCR10/QCR9, UQCR11/QCR10 and a cleavage product of UQCRFS1). This cytochrome bc1 complex then forms a dimer. Heme b is required as a cofactor.

The protein resides in the mitochondrion inner membrane. In terms of biological role, component of the ubiquinol-cytochrome c reductase complex (complex III or cytochrome b-c1 complex) that is part of the mitochondrial respiratory chain. The b-c1 complex mediates electron transfer from ubiquinol to cytochrome c. Contributes to the generation of a proton gradient across the mitochondrial membrane that is then used for ATP synthesis. The protein is Cytochrome b (MT-CYB) of Akodon iniscatus (Intelligent grass mouse).